The primary structure comprises 467 residues: Glutamate--tRNA ligase 1 (467 aa).

Residues 8–18 carry the 'HIGH' region motif; sequence PSPTGHLHVGG. Positions 230-234 match the 'KMSKS' region motif; sequence PLSKR. Position 233 (K233) interacts with ATP.

This sequence belongs to the class-I aminoacyl-tRNA synthetase family. Glutamate--tRNA ligase type 1 subfamily. In terms of assembly, monomer.

Its subcellular location is the cytoplasm. It carries out the reaction tRNA(Glu) + L-glutamate + ATP = L-glutamyl-tRNA(Glu) + AMP + diphosphate. Catalyzes the attachment of glutamate to tRNA(Glu) in a two-step reaction: glutamate is first activated by ATP to form Glu-AMP and then transferred to the acceptor end of tRNA(Glu). The polypeptide is Glutamate--tRNA ligase 1 (Petrotoga mobilis (strain DSM 10674 / SJ95)).